Here is a 394-residue protein sequence, read N- to C-terminus: MKRSPEDIQSEFDKEGASRSPIQIEDIVIGANAKEELLRFLQKKCWNHPVIVCDRNTYEAAGRLLADELRAGGIKASKVIIPEHEAGAAAADERTLVYTLINLAEETDVIIAAGAGTIHDITRFAAYQRGLPFISFPTAPSVDGFTSAGAPLILNGIKTTIQTKAPIALFADTNVLKEAPRSMTAAGFGDMLGKITSLADWEISRRLAGEPYSEAGAKLVKDALWQCIDHRAAIAMGTEAGIQILMEALIVSGLVMLALDHSRPASGGEHHISHWIEMEMLKAKQPPILHGAKVGCACAVLSDTYKELACHEKLAELPPHFREAIQSAYEGLPDGKTIAGWLASAGGPACFDEIGVKQDLVSDALKHAHTLRDRYTGLTIINENAALFAHHLHQ.

Residues Asp-54, 116-120 (GTIHD), and 138-141 (TAPS) each bind NAD(+). Asp-143 contacts substrate. An NAD(+)-binding site is contributed by Ser-147. Asp-190 contacts substrate. Asp-190 and His-270 together coordinate Ni(2+). His-274 contributes to the substrate binding site. His-290 contacts Ni(2+).

It belongs to the glycerol-1-phosphate dehydrogenase family. As to quaternary structure, homodimer. The cofactor is Ni(2+).

The protein localises to the cytoplasm. The enzyme catalyses sn-glycerol 1-phosphate + NAD(+) = dihydroxyacetone phosphate + NADH + H(+). It carries out the reaction sn-glycerol 1-phosphate + NADP(+) = dihydroxyacetone phosphate + NADPH + H(+). Its function is as follows. Catalyzes the NAD(P)H-dependent reduction of dihydroxyacetonephosphate (DHAP or glycerone phosphate) to glycerol 1-phosphate (G1P). The G1P thus generated is probably used for the synthesis of phosphoglycerolipids in Gram-positive bacterial species. This chain is Glycerol-1-phosphate dehydrogenase [NAD(P)+], found in Bacillus velezensis (strain DSM 23117 / BGSC 10A6 / LMG 26770 / FZB42) (Bacillus amyloliquefaciens subsp. plantarum).